The primary structure comprises 238 residues: Small ribosomal subunit protein uS2 (238 aa).

It belongs to the universal ribosomal protein uS2 family.

The polypeptide is Small ribosomal subunit protein uS2 (Prochlorococcus marinus (strain SARG / CCMP1375 / SS120)).